A 124-amino-acid polypeptide reads, in one-letter code: Urease subunit beta (124 aa).

It belongs to the urease beta subunit family. As to quaternary structure, heterotrimer of UreA (gamma), UreB (beta) and UreC (alpha) subunits. Three heterotrimers associate to form the active enzyme.

The protein resides in the cytoplasm. It catalyses the reaction urea + 2 H2O + H(+) = hydrogencarbonate + 2 NH4(+). The protein operates within nitrogen metabolism; urea degradation; CO(2) and NH(3) from urea (urease route): step 1/1. The polypeptide is Urease subunit beta (Ureaplasma parvum serovar 3 (strain ATCC 27815 / 27 / NCTC 11736)).